Here is a 634-residue protein sequence, read N- to C-terminus: Chaperone protein dnaK2 (634 aa).

Thr-197 carries the phosphothreonine; by autocatalysis modification. The span at 601–623 shows a compositional bias: low complexity; sequence GAAAAESGADAGAAGAGDSSSGD. The tract at residues 601–634 is disordered; sequence GAAAAESGADAGAAGAGDSSSGDDVIDAEFTESK. Residues 624–634 are compositionally biased toward acidic residues; sequence DVIDAEFTESK.

This sequence belongs to the heat shock protein 70 family.

Acts as a chaperone. This Prochlorococcus marinus (strain MIT 9313) protein is Chaperone protein dnaK2 (dnaK2).